Consider the following 154-residue polypeptide: Transcriptional repressor NrdR (154 aa).

The segment at 3-34 is a zinc-finger region; it reads CPFCRHPDSRVVDSREADEGQAIRRRRSCPEC. The ATP-cone domain maps to 46 to 136; it reads LAVVKRSGVT…VYRGFSSAED (91 aa).

Belongs to the NrdR family. Zn(2+) serves as cofactor.

In terms of biological role, negatively regulates transcription of bacterial ribonucleotide reductase nrd genes and operons by binding to NrdR-boxes. In Mycobacteroides abscessus (strain ATCC 19977 / DSM 44196 / CCUG 20993 / CIP 104536 / JCM 13569 / NCTC 13031 / TMC 1543 / L948) (Mycobacterium abscessus), this protein is Transcriptional repressor NrdR.